The sequence spans 246 residues: tRNA (guanine-N(1)-)-methyltransferase (246 aa).

S-adenosyl-L-methionine is bound by residues glycine 114 and isoleucine 134–leucine 139.

It belongs to the RNA methyltransferase TrmD family. Homodimer.

Its subcellular location is the cytoplasm. The enzyme catalyses guanosine(37) in tRNA + S-adenosyl-L-methionine = N(1)-methylguanosine(37) in tRNA + S-adenosyl-L-homocysteine + H(+). Functionally, specifically methylates guanosine-37 in various tRNAs. The sequence is that of tRNA (guanine-N(1)-)-methyltransferase from Coxiella burnetii (strain RSA 493 / Nine Mile phase I).